A 194-amino-acid polypeptide reads, in one-letter code: MATRLIIGLGNPGPKYQWTRHNAGFMVLDHLSRVMGTSVAKKSFSGLYGEGSWHGDRLLLLKPQTFMNLSGRSAAEALRFHKLTLSDLIVIHDDLDIPFGRVKLKEGGGHGGHNGLRSLMQELGGGGFVRIRIGVGRPLRGDAADYVLANFSSAEMAGLPALLDGVVDLLGELVRNGLPRTMSLYNNKDFLPAA.

Residue Tyr16 participates in tRNA binding. Residue His21 is the Proton acceptor of the active site. 3 residues coordinate tRNA: Phe66, Asn68, and Asn114.

The protein belongs to the PTH family. Monomer.

The protein localises to the cytoplasm. The catalysed reaction is an N-acyl-L-alpha-aminoacyl-tRNA + H2O = an N-acyl-L-amino acid + a tRNA + H(+). Functionally, hydrolyzes ribosome-free peptidyl-tRNAs (with 1 or more amino acids incorporated), which drop off the ribosome during protein synthesis, or as a result of ribosome stalling. Catalyzes the release of premature peptidyl moieties from peptidyl-tRNA molecules trapped in stalled 50S ribosomal subunits, and thus maintains levels of free tRNAs and 50S ribosomes. This chain is Peptidyl-tRNA hydrolase, found in Geobacter metallireducens (strain ATCC 53774 / DSM 7210 / GS-15).